The sequence spans 67 residues: Large ribosomal subunit protein bL31 (67 aa).

Belongs to the bacterial ribosomal protein bL31 family. Type A subfamily. Part of the 50S ribosomal subunit.

Its function is as follows. Binds the 23S rRNA. This is Large ribosomal subunit protein bL31 from Helicobacter acinonychis (strain Sheeba).